A 198-amino-acid chain; its full sequence is Cytochrome c oxidase assembly protein CtaG (198 aa).

The Cytoplasmic portion of the chain corresponds to 1 to 12 (MADNGQADRKER). The chain crosses the membrane as a helical; Signal-anchor for type II membrane protein span at residues 13 to 35 (SNGVIVGTCLAFVAGMIGMAYAA). The Periplasmic portion of the chain corresponds to 36–198 (VPLYDMFCRV…QVKAKAENKL (163 aa)).

The protein belongs to the COX11/CtaG family.

Its subcellular location is the cell inner membrane. Exerts its effect at some terminal stage of cytochrome c oxidase synthesis, probably by being involved in the insertion of the copper B into subunit I. This chain is Cytochrome c oxidase assembly protein CtaG, found in Rhizobium meliloti (strain 1021) (Ensifer meliloti).